The chain runs to 212 residues: Large ribosomal subunit protein bL25 (212 aa).

The disordered stretch occupies residues 1 to 25; that stretch reads MSQSTIHKIAVKKRTETGKNENNRL. Basic and acidic residues predominate over residues 13 to 24; the sequence is KRTETGKNENNR.

This sequence belongs to the bacterial ribosomal protein bL25 family. CTC subfamily. In terms of assembly, part of the 50S ribosomal subunit; part of the 5S rRNA/L5/L18/L25 subcomplex. Contacts the 5S rRNA. Binds to the 5S rRNA independently of L5 and L18.

Functionally, this is one of the proteins that binds to the 5S RNA in the ribosome where it forms part of the central protuberance. In Leptospira borgpetersenii serovar Hardjo-bovis (strain JB197), this protein is Large ribosomal subunit protein bL25.